A 102-amino-acid chain; its full sequence is Thioredoxin (102 aa).

One can recognise a Thioredoxin domain in the interval 1–102 (MVQVVSQENF…SLIKLISKHQ (102 aa)). Cysteine 28 and cysteine 31 are disulfide-bonded.

It belongs to the thioredoxin family.

Its function is as follows. Participates in various redox reactions through the reversible oxidation of its active center dithiol to a disulfide and catalyzes dithiol-disulfide exchange reactions. This is Thioredoxin (trxA) from Chlamydia trachomatis serovar D (strain ATCC VR-885 / DSM 19411 / UW-3/Cx).